We begin with the raw amino-acid sequence, 124 residues long: Small ribosomal subunit protein uS12 (124 aa).

Asp-89 bears the 3-methylthioaspartic acid mark.

The protein belongs to the universal ribosomal protein uS12 family. In terms of assembly, part of the 30S ribosomal subunit. Contacts proteins S8 and S17. May interact with IF1 in the 30S initiation complex.

With S4 and S5 plays an important role in translational accuracy. Functionally, interacts with and stabilizes bases of the 16S rRNA that are involved in tRNA selection in the A site and with the mRNA backbone. Located at the interface of the 30S and 50S subunits, it traverses the body of the 30S subunit contacting proteins on the other side and probably holding the rRNA structure together. The combined cluster of proteins S8, S12 and S17 appears to hold together the shoulder and platform of the 30S subunit. The polypeptide is Small ribosomal subunit protein uS12 (Yersinia pestis (strain Pestoides F)).